Reading from the N-terminus, the 79-residue chain is Small ribosomal subunit protein eS17 (79 aa).

It belongs to the eukaryotic ribosomal protein eS17 family.

This chain is Small ribosomal subunit protein eS17, found in Saccharolobus solfataricus (strain ATCC 35092 / DSM 1617 / JCM 11322 / P2) (Sulfolobus solfataricus).